The following is a 510-amino-acid chain: Probable cytochrome P450 4aa1 (510 aa).

Residue Cys-450 coordinates heme.

The protein belongs to the cytochrome P450 family. Heme serves as cofactor.

The protein localises to the endoplasmic reticulum membrane. Its subcellular location is the microsome membrane. In terms of biological role, may be involved in the metabolism of insect hormones and in the breakdown of synthetic insecticides. This is Probable cytochrome P450 4aa1 (Cyp4aa1) from Drosophila melanogaster (Fruit fly).